The primary structure comprises 548 residues: Glutamate--tRNA ligase (548 aa).

Residues 102 to 112 carry the 'HIGH' region motif; sequence PSPSGPLHIGH.

It belongs to the class-I aminoacyl-tRNA synthetase family. Glutamate--tRNA ligase type 2 subfamily.

The protein localises to the cytoplasm. The enzyme catalyses tRNA(Glu) + L-glutamate + ATP = L-glutamyl-tRNA(Glu) + AMP + diphosphate. Its function is as follows. Catalyzes the attachment of glutamate to tRNA(Glu) in a two-step reaction: glutamate is first activated by ATP to form Glu-AMP and then transferred to the acceptor end of tRNA(Glu). The sequence is that of Glutamate--tRNA ligase from Thermoplasma volcanium (strain ATCC 51530 / DSM 4299 / JCM 9571 / NBRC 15438 / GSS1).